The following is a 337-amino-acid chain: uncharacterized protein (337 aa).

Residues 12–60 (SLNYVDLPDTVHRKIFEYLNPWEIFKLSRISKAIHVTILKNKKFAVKDI) form the F-box domain.

This is an uncharacterized protein from Caenorhabditis elegans.